The chain runs to 468 residues: uncharacterized protein (468 aa).

6 helical membrane passes run 59-79 (IPIVIIAVIYSSFIFFFALFI), 135-155 (TWINSILEILALIYSFLLLLV), 215-235 (VFPFTPCPLPLLLFPIFLSIL), 297-317 (THCCLNVFASSAFFVLLMVLV), 348-368 (HFIPLILTVVIELVITGLVSY), and 385-405 (VFTVMFTIIAVFRFVFIIILF).

Its subcellular location is the membrane. This is an uncharacterized protein from Caenorhabditis elegans.